Reading from the N-terminus, the 313-residue chain is Ribosomal protein L11 methyltransferase (313 aa).

Residues Thr-161, Gly-182, Asp-204, and Asn-247 each coordinate S-adenosyl-L-methionine.

This sequence belongs to the methyltransferase superfamily. PrmA family.

The protein resides in the cytoplasm. The catalysed reaction is L-lysyl-[protein] + 3 S-adenosyl-L-methionine = N(6),N(6),N(6)-trimethyl-L-lysyl-[protein] + 3 S-adenosyl-L-homocysteine + 3 H(+). Functionally, methylates ribosomal protein L11. This chain is Ribosomal protein L11 methyltransferase, found in Alkaliphilus oremlandii (strain OhILAs) (Clostridium oremlandii (strain OhILAs)).